The sequence spans 338 residues: Diacylglycerol acyltransferase/mycolyltransferase Ag85A (338 aa).

The N-terminal stretch at 1–42 (MQLVDRVRGAVTGMSRRLVVGAVGAALVSGLVGAVGGTATAG) is a signal peptide. 85-86 (LR) contributes to the substrate binding site. A fibronectin-binding region spans residues 101 to 111 (FEWYDQSGLSV). A disulfide bridge links Cys130 with Cys135. Residues Ser169 and Asp197 each coordinate substrate. Ser169 functions as the Nucleophile in the catalytic mechanism. Glu273 is a catalytic residue. Residues 275–278 (FVRT), Lys282, and 305–307 (HSW) each bind substrate. The active site involves His305.

This sequence belongs to the mycobacterial A85 antigen family. As to quaternary structure, homodimer.

The protein localises to the secreted. It localises to the cell wall. Its subcellular location is the cytoplasm. The catalysed reaction is an acyl-CoA + a 1,2-diacyl-sn-glycerol = a triacyl-sn-glycerol + CoA. It carries out the reaction 2 alpha,alpha'-trehalose 6-mycolate = alpha,alpha'-trehalose 6,6'-bismycolate + alpha,alpha-trehalose. Functionally, the antigen 85 proteins (FbpA, FbpB, FbpC) are responsible for the high affinity of mycobacteria for fibronectin, a large adhesive glycoprotein, which facilitates the attachment of M.tuberculosis to murine alveolar macrophages (AMs). They also help to maintain the integrity of the cell wall by catalyzing the transfer of mycolic acids to cell wall arabinogalactan, and through the synthesis of alpha,alpha-trehalose dimycolate (TDM, cord factor). They catalyze the transfer of a mycoloyl residue from one molecule of alpha,alpha-trehalose monomycolate (TMM) to another TMM, leading to the formation of TDM. FbpA mediates triacylglycerol (TAG) formation with long-chain acyl-CoA as the acyl donor and 1,2-dipalmitoyl-sn-glycerol (1,2-dipalmitin) as the acyl acceptor. It has a preference for C26:0-CoA over C18:1-CoA. This is Diacylglycerol acyltransferase/mycolyltransferase Ag85A (fbpA) from Mycobacterium bovis (strain ATCC BAA-935 / AF2122/97).